Reading from the N-terminus, the 324-residue chain is Zinc transporter ZIP1 (324 aa).

The Extracellular segment spans residues 1–30 (MGPWGEPELLVWRPEAAASEAPVPMGLEVK). Residues 31–51 (LGALVLLLVLTLICSLVPVCV) traverse the membrane as a helical segment. Topologically, residues 52 to 68 (LRRPGANPEASASRQKA) are cytoplasmic. A helical transmembrane segment spans residues 69 to 89 (LSLVSCFAGGVFLATCLLDLL). At 90–104 (PDYLGAIDEALAALH) the chain is on the extracellular side. The chain crosses the membrane as a helical span at residues 105 to 125 (VTLQFPLQEFILAMGFFLVLV). The Cytoplasmic segment spans residues 126-179 (MEQITLAYKEQSGPPPREETRALLGTVNGGPQHWHDGLGVPQAGGASSAPSALR). The chain crosses the membrane as a helical span at residues 180-200 (ACVLVFSLALHSVFEGLAVGL). Residues 201–206 (QRDQAR) lie on the Extracellular side of the membrane. A helical transmembrane segment spans residues 207-227 (AMELCLALLLHKGILAVSLSL). Residues 228-237 (RLLQSHLRAQ) are Cytoplasmic-facing. Residues 238–258 (VVAGCGILFSCMTPLGIGLGT) traverse the membrane as a helical segment. Over 259 to 272 (ALAESAGPLHQLAQ) the chain is Extracellular. The chain crosses the membrane as a helical span at residues 273–293 (SVLEGMAAGTFLYITFLEILP). Residues 294–303 (QELATSEQRI) are Cytoplasmic-facing. A helical transmembrane segment spans residues 304 to 324 (LKVILLLAGFALLTGLLFIQI).

This sequence belongs to the ZIP transporter (TC 2.A.5) family.

The protein resides in the cell membrane. The protein localises to the endoplasmic reticulum membrane. It catalyses the reaction Zn(2+)(in) = Zn(2+)(out). Transporter for the divalent cation Zn(2+). Mediates the influx of Zn(2+) into cells from extracellular space. The chain is Zinc transporter ZIP1 (SLC39A1) from Bos taurus (Bovine).